The primary structure comprises 342 residues: Nucleoid-associated protein SO_2177 (342 aa).

The protein belongs to the YejK family.

Its subcellular location is the cytoplasm. The protein localises to the nucleoid. This Shewanella oneidensis (strain ATCC 700550 / JCM 31522 / CIP 106686 / LMG 19005 / NCIMB 14063 / MR-1) protein is Nucleoid-associated protein SO_2177.